The primary structure comprises 343 residues: MYTLISIIGKYISCLPALLIVAFLTISERKTMASMQRRLGQNIVGYYGLLQAFADALKLLLKEYVAPTQANIILLFLGPIITLIFSLLGYRVIPYGSGLFISDFNLGILYILAVSSLATYGILLAGWSANSKYAFLGSLRSTAQLISYELLLRFYILLVILFTGSLNLTTIIESQKVVYFILPLLPIFLIFFIGCIAETNRAPFDLAEAESELVSGFMTEHSAVIFMIFFFLAQYASIVLICILSSVLFLGGYLNILPLNTYNVCDFNSLFSDYLINGLSSLNLAIKTAFLIFVFIWVRASFPRIRFDQLMSVCWTILLPIIIAYVVLLPCIVIGLNSSILLI.

A run of 8 helical transmembrane segments spans residues 4–24, 70–90, 106–126, 154–174, 177–197, 224–244, 278–298, and 316–336; these read LISIIGKYISCLPALLIVAFL, ANIILLFLGPIITLIFSLLGY, LGILYILAVSSLATYGILLAG, FYILLVILFTGSLNLTTIIES, VVYFILPLLPIFLIFFIGCIA, VIFMIFFFLAQYASIVLICIL, GLSSLNLAIKTAFLIFVFIWV, and TILLPIIIAYVVLLPCIVIGL.

Belongs to the complex I subunit 1 family.

Its subcellular location is the mitochondrion inner membrane. It carries out the reaction a ubiquinone + NADH + 5 H(+)(in) = a ubiquinol + NAD(+) + 4 H(+)(out). Core subunit of the mitochondrial membrane respiratory chain NADH dehydrogenase (Complex I) that is believed to belong to the minimal assembly required for catalysis. Complex I functions in the transfer of electrons from NADH to the respiratory chain. The immediate electron acceptor for the enzyme is believed to be ubiquinone. This chain is NADH-ubiquinone oxidoreductase chain 1 (ND1), found in Trichophyton rubrum (Athlete's foot fungus).